Consider the following 253-residue polypeptide: Phosphoadenosine 5'-phosphosulfate reductase (253 aa).

Residue Cys-239 is the Nucleophile; cysteine thiosulfonate intermediate of the active site.

Belongs to the PAPS reductase family. CysH subfamily.

It is found in the cytoplasm. It catalyses the reaction [thioredoxin]-disulfide + sulfite + adenosine 3',5'-bisphosphate + 2 H(+) = [thioredoxin]-dithiol + 3'-phosphoadenylyl sulfate. It participates in sulfur metabolism; hydrogen sulfide biosynthesis; sulfite from sulfate: step 3/3. Functionally, catalyzes the formation of sulfite from phosphoadenosine 5'-phosphosulfate (PAPS) using thioredoxin as an electron donor. The chain is Phosphoadenosine 5'-phosphosulfate reductase from Aliivibrio salmonicida (strain LFI1238) (Vibrio salmonicida (strain LFI1238)).